Consider the following 748-residue polypeptide: Disintegrin and metalloproteinase domain-containing protein 10 (748 aa).

A signal peptide spans 1-19; sequence MVLLRVLILLLSWVAGLGG. The propeptide occupies 20–213; sequence QYGNPLNKYI…NGPELLRKKR (194 aa). Residues 20 to 672 are Extracellular-facing; sequence QYGNPLNKYI…SPELYENIAE (653 aa). The short motif at 171–178 is the Cysteine switch element; that stretch reads GGCADHSV. Cysteine 173 serves as a coordination point for Zn(2+). Residues 220–456 enclose the Peptidase M12B domain; the sequence is NTCQLYIQTD…KRNNCFVESG (237 aa). Asparagine 267 and asparagine 278 each carry an N-linked (GlcNAc...) asparagine glycan. Disulfide bonds link cysteine 344/cysteine 451, cysteine 399/cysteine 435, cysteine 460/cysteine 495, cysteine 471/cysteine 484, cysteine 473/cysteine 479, cysteine 483/cysteine 515, cysteine 503/cysteine 511, cysteine 510/cysteine 536, cysteine 524/cysteine 543, cysteine 530/cysteine 562, cysteine 555/cysteine 567, cysteine 572/cysteine 598, cysteine 580/cysteine 607, cysteine 582/cysteine 597, cysteine 594/cysteine 639, and cysteine 632/cysteine 645. Histidine 383 contributes to the Zn(2+) binding site. Glutamate 384 is a catalytic residue. Zn(2+) is bound by residues histidine 387 and histidine 393. A glycan (N-linked (GlcNAc...) asparagine) is linked at asparagine 439. A Disintegrin domain is found at 457 to 551; the sequence is QPICGNGMVE…LCPASDPKPN (95 aa). The N-linked (GlcNAc...) asparagine glycan is linked to asparagine 551. The helical transmembrane segment at 673 to 696 threads the bilayer; the sequence is WIVAYWWAVLLMGIALIMLMAGFI. Topologically, residues 697–748 are cytoplasmic; sequence KICSVHTPSSNPKLPPPKPLPGTLKRRRPPQPIQQPQRQRPRESYQMGHMRR. Residues 704-748 are disordered; sequence PSSNPKLPPPKPLPGTLKRRRPPQPIQQPQRQRPRESYQMGHMRR. Residues 708-715 carry the SH3-binding motif; sequence PKLPPPKP. Threonine 719 is modified (phosphothreonine). Positions 722–728 match the SH3-binding motif; sequence RRRPPQP. An interaction with AP2A1, AP2A2 and AP2M1 region spans residues 734–748; it reads RQRPRESYQMGHMRR.

Forms a ternary EFNA5-EPHA3-ADAM10 complex mediating EFNA5 extracellular domain shedding by ADAM10 which regulates the EFNA5-EPHA3 complex internalization and function, the cleavage occurs in trans, with ADAM10 and its substrate being on the membranes of opposing cells. Interacts with the clathrin adapter AP2 complex subunits AP2A1, AP2A2, AP2B1, and AP2M1; this interaction facilitates ADAM10 endocytosis from the plasma membrane during long-term potentiation in hippocampal neurons. Forms a ternary complex composed of ADAM10, EPHA4 and CADH1; within the complex, ADAM10 cleaves CADH1 which disrupts adherens junctions. Interacts with EPHA2. Interacts with NGF in a divalent cation-dependent manner. Interacts with TSPAN14; the interaction promotes ADAM10 maturation and cell surface expression. Interacts with TSPAN5, TSPAN10, TSPAN14, TSPAN15, TSPAN17 and TSPAN33; these interactions regulate ADAM10 substrate specificity, endocytosis and turnover. Interacts (via extracellular domain) with TSPAN33 (via extracellular domain) and (via cytoplasmic domain) with AFDN; interaction with TSPAN33 allows the docking of ADAM10 to zonula adherens through a PDZ11-dependent interaction between TSPAN33 and PLEKHA7 while interaction with AFDN locks ADAM10 at zonula adherens. Interacts with DLG1; this interaction recruits ADAM10 to the cell membrane during long-term depression in hippocampal neurons. Interacts (via extracellular domain) with BACE1 (via extracellular domain). Interacts with FAM171A1. It depends on Zn(2+) as a cofactor. The precursor is cleaved by furin and PCSK7. As to expression, expressed at low level in kidney, spleen, lung, adrenal, heart and peripheral nerve.

The protein localises to the golgi apparatus membrane. Its subcellular location is the cell membrane. It is found in the cytoplasmic vesicle. The protein resides in the clathrin-coated vesicle. It localises to the cell projection. The protein localises to the axon. Its subcellular location is the dendrite. It is found in the cell junction. The protein resides in the adherens junction. It localises to the cytoplasm. The catalysed reaction is Endopeptidase of broad specificity.. With respect to regulation, catalytically inactive when the propeptide is intact and associated with the mature enzyme. The disintegrin and cysteine-rich regions modulate access of substrates to exerts an inhibitory effect on the cleavage of ADAM10 substrates. Functionally, transmembrane metalloprotease which mediates the ectodomain shedding of a myriad of transmembrane proteins, including adhesion proteins, growth factor precursors and cytokines being essential for development and tissue homeostasis. Associates with six members of the tetraspanin superfamily TspanC8 which regulate its exit from the endoplasmic reticulum and its substrate selectivity. Cleaves the membrane-bound precursor of TNF-alpha at '76-Ala-|-Val-77' to its mature soluble form. Responsible for the proteolytical release of soluble JAM3 from endothelial cells surface. Responsible for the proteolytic release of several other cell-surface proteins, including heparin-binding epidermal growth-like factor, ephrin-A2, CD44, CDH2 and for constitutive and regulated alpha-secretase cleavage of amyloid precursor protein (APP). Contributes to the normal cleavage of the cellular prion protein. Involved in the cleavage of the adhesion molecule L1 at the cell surface and in released membrane vesicles, suggesting a vesicle-based protease activity. Also controls the proteolytic processing of Notch and mediates lateral inhibition during neurogenesis. Required for the development of type 1 transitional B cells into marginal zone B cells, probably by cleaving Notch. Responsible for the FasL ectodomain shedding and for the generation of the remnant ADAM10-processed FasL (FasL APL) transmembrane form. Also cleaves the ectodomain of the integral membrane proteins CORIN and ITM2B. Mediates the proteolytic cleavage of LAG3, leading to release the secreted form of LAG3. Mediates the proteolytic cleavage of IL6R and IL11RA, leading to the release of secreted forms of IL6R and IL11RA. Enhances the cleavage of CHL1 by BACE1. Cleaves NRCAM. Cleaves TREM2, resulting in shedding of the TREM2 ectodomain. Involved in the development and maturation of glomerular and coronary vasculature. During development of the cochlear organ of Corti, promotes pillar cell separation by forming a ternary complex with CADH1 and EPHA4 and cleaving CADH1 at adherens junctions. May regulate the EFNA5-EPHA3 signaling. Regulates leukocyte transmigration as a sheddase for the adherens junction protein VE-cadherin/CDH5 in endothelial cells. The polypeptide is Disintegrin and metalloproteinase domain-containing protein 10 (ADAM10) (Bos taurus (Bovine)).